Here is a 195-residue protein sequence, read N- to C-terminus: Urease accessory protein UreG (195 aa).

9–16 is a binding site for GTP; the sequence is GPVGSGKT.

It belongs to the SIMIBI class G3E GTPase family. UreG subfamily. Homodimer. UreD, UreF and UreG form a complex that acts as a GTP-hydrolysis-dependent molecular chaperone, activating the urease apoprotein by helping to assemble the nickel containing metallocenter of UreC. The UreE protein probably delivers the nickel.

The protein resides in the cytoplasm. Its function is as follows. Facilitates the functional incorporation of the urease nickel metallocenter. This process requires GTP hydrolysis, probably effectuated by UreG. In Aliarcobacter butzleri (strain RM4018) (Arcobacter butzleri), this protein is Urease accessory protein UreG.